The primary structure comprises 547 residues: MAAKEVKFGDSARKKMLTGVNVLADAVKATLGPKGRNVIIEKSFGAPTITKDGVSVAKEIELKDRFENMGAQLVKDVASRANDDAGDGTTTATVLAQSIVNEGLKAVAAGMNPMDLKRGIDKATIAIVKELKGLSKPCADSKAIAQVGTISANSDNSIGDIIAEAMEKVGKEGVITVEEGSGLENELSVVEGMQFDRGYLSPYFINKPDTMVAELDGPLILLVDKKISNIREMLPVLEAVAKAGRPLLIVAEDVEGEALATLVVNNMRGIVKVAAVKAPGFGDRRKAMLQDIAVLTGGTVISEEIGLSLESTTLEHLGNAKRVILSKENTTIIDGAGVEADIQARVTQIRQQVADTSSDYDREKLQERLAKLSGGVAVIKVGAGSEVEMKEKKARVEDALHATRAAVEEGVVPGGGVALIRALQGINDLKGDNADQDVGIAVLRRAIEAPLRQIVANSGDEPSVVVDKVKQGAGNFGYNAATSEYGDMIEMGILDPTKVTRSALQAASSIGGLILTTEAAVAEIVEDKPAAGGMPDMGGMGGMGGMM.

Residues Thr30–Pro33, Lys51, Asp87–Thr91, Gly415, Asn479–Ala481, and Asp495 each bind ATP.

The protein belongs to the chaperonin (HSP60) family. Forms a cylinder of 14 subunits composed of two heptameric rings stacked back-to-back. Interacts with the co-chaperonin GroES.

It is found in the cytoplasm. It carries out the reaction ATP + H2O + a folded polypeptide = ADP + phosphate + an unfolded polypeptide.. Together with its co-chaperonin GroES, plays an essential role in assisting protein folding. The GroEL-GroES system forms a nano-cage that allows encapsulation of the non-native substrate proteins and provides a physical environment optimized to promote and accelerate protein folding. The protein is Chaperonin GroEL of Pseudomonas fluorescens (strain ATCC BAA-477 / NRRL B-23932 / Pf-5).